The sequence spans 88 residues: Large ribosomal subunit protein bL27 (88 aa).

Residues 1–21 are disordered; it reads MAHKKGASSSRNGRDSNAQRL. The segment covering 7–19 has biased composition (polar residues); sequence ASSSRNGRDSNAQ.

Belongs to the bacterial ribosomal protein bL27 family.

In Frankia casuarinae (strain DSM 45818 / CECT 9043 / HFP020203 / CcI3), this protein is Large ribosomal subunit protein bL27.